We begin with the raw amino-acid sequence, 319 residues long: Shiga-like toxin 2 subunit A (319 aa).

Positions 1–22 (MKCILFKWVLCLLLGFSSVSYS) are cleaved as a signal peptide. The tract at residues 23-272 (REFTIDFSTQ…CHHQGARSVR (250 aa)) is A1. The active site involves Glu-189. Cys-263 and Cys-282 form a disulfide bridge. An A2 region spans residues 273–314 (AVNEESQPECQITGDRPVIKINNTLWESNTAAAFLNRKSQFL).

It belongs to the ribosome-inactivating protein family. In terms of assembly, shiga-like toxin contains a single A subunit and multiple copies of a B subunit.

It localises to the secreted. The enzyme catalyses Endohydrolysis of the N-glycosidic bond at one specific adenosine on the 28S rRNA.. Its function is as follows. The A subunit is responsible for inhibiting protein synthesis through the catalytic inactivation of 60S ribosomal subunits. After endocytosis, the A subunit is cleaved by furin in two fragments, A1 and A2: A1 is the catalytically active fragment, and A2 is essential for holotoxin assembly with the B subunits. The polypeptide is Shiga-like toxin 2 subunit A (stxA2) (Escherichia coli O157:H7 (Bacteriophage 933W)).